A 500-amino-acid polypeptide reads, in one-letter code: MEAPTLSQLEGLRYSELQKLAKTAGLKANLKADKLLKVLKAHFYPESKNETLDSDGSSSLTDTDELNSSQEKEEPVSVSFVTHRRGRGRKPIRNQDTPKDEFLTVSAGVGTENMASSIDRTQQQNCTESKKEETTSPIIDNKHRKRSRSEDTSKQNNLESTGKTEKRQKKASNVTSVASTGKIPRLAGRLSKPGSKPSTPNFKKLHEAHFKKMESIDKYMERKQKRLDAVSSSIQEVKMLTKKSNLLKSVEKTPVSDIKKPVKSRLSLLSPLPRTTGASPSRTPMSQRRSCRSSTASKSILVDRSGFKPSVFSSSKMNVRFSEATKDNEHKRSLIKTPARKSSSFLAVTPESEPRRILPSVRKTELLPAPEKADKPDVNITLNTTTQPSPATGMSACKAITPFKFTAQNTETPNTKKKGKFDLQASLSRQLGYQPHKGKLKPWGESKENKPDPNSNVSVLKNNYKQPHLQTREDRRNQHVQNRKNKRDQALGTRRGVPVK.

Disordered regions lie at residues Lys48 to Lys204, Thr241 to Ser299, Val319 to Glu353, and Glu365 to Lys500. A compositionally biased stretch (basic residues) spans Thr82–Ile92. Over residues Asn113–Thr127 the composition is skewed to polar residues. The span at Ser264 to Arg274 shows a compositional bias: low complexity. Polar residues predominate over residues Thr276–Lys298. The segment covering Glu323 to Arg332 has biased composition (basic and acidic residues). The segment covering Ile380–Thr392 has biased composition (polar residues). Over residues Pro442–Pro451 the composition is skewed to basic and acidic residues. The span at Asp452 to Leu469 shows a compositional bias: polar residues.

The protein belongs to the NUSAP family. As to quaternary structure, interacts with DNA, microtubules, ipo7, kpna2 and kpnb1. Microtubule stabilization is inhibited by ipo7 and kpna2, while microtubule bundling is inhibited by kpnb1. Active GTP-bound ran causes dissociation of ipo7 and kpnb1.

The protein localises to the cytoplasm. It localises to the nucleus. Its subcellular location is the cytoskeleton. The protein resides in the spindle. Functionally, microtubule-associated protein with the capacity to bundle and stabilize microtubules. May associate with chromosomes and promote the organization of meiotic or mitotic spindle microtubules around them. The sequence is that of Nucleolar and spindle-associated protein 1 (nusap1) from Xenopus tropicalis (Western clawed frog).